The chain runs to 253 residues: 3-deoxy-manno-octulosonate cytidylyltransferase (253 aa).

This sequence belongs to the KdsB family.

The protein resides in the cytoplasm. The enzyme catalyses 3-deoxy-alpha-D-manno-oct-2-ulosonate + CTP = CMP-3-deoxy-beta-D-manno-octulosonate + diphosphate. It participates in nucleotide-sugar biosynthesis; CMP-3-deoxy-D-manno-octulosonate biosynthesis; CMP-3-deoxy-D-manno-octulosonate from 3-deoxy-D-manno-octulosonate and CTP: step 1/1. It functions in the pathway bacterial outer membrane biogenesis; lipopolysaccharide biosynthesis. Functionally, activates KDO (a required 8-carbon sugar) for incorporation into bacterial lipopolysaccharide in Gram-negative bacteria. This is 3-deoxy-manno-octulosonate cytidylyltransferase from Edwardsiella ictaluri (strain 93-146).